Consider the following 422-residue polypeptide: L-2-hydroxyglutarate dehydrogenase (422 aa).

The protein belongs to the L2HGDH family. FAD is required as a cofactor.

It localises to the cell inner membrane. It carries out the reaction (S)-2-hydroxyglutarate + a quinone = a quinol + 2-oxoglutarate. Its pathway is amino-acid degradation. In terms of biological role, catalyzes the dehydrogenation of L-2-hydroxyglutarate (L2HG) to alpha-ketoglutarate and couples to the respiratory chain by feeding electrons from the reaction into the membrane quinone pool. Functions in a L-lysine degradation pathway that proceeds via cadaverine, glutarate and L-2-hydroxyglutarate. Also displays some oxidase activity in vitro on L-2-hydroxyglutarate with O2 as the electron acceptor, but this activity is most likely not physiological. This Salmonella houtenae protein is L-2-hydroxyglutarate dehydrogenase.